A 384-amino-acid polypeptide reads, in one-letter code: tRNA-specific 2-thiouridylase MnmA (384 aa).

Residues 9 to 16 (GMSGGVDS) and Met-35 contribute to the ATP site. Positions 95–97 (NPD) are interaction with target base in tRNA. Catalysis depends on Cys-100, which acts as the Nucleophile. A disulfide bond links Cys-100 and Cys-196. An ATP-binding site is contributed by Gly-124. Positions 146–148 (KDQ) are interaction with tRNA. Cys-196 functions as the Cysteine persulfide intermediate in the catalytic mechanism. The segment at 308–309 (RY) is interaction with tRNA.

The protein belongs to the MnmA/TRMU family.

Its subcellular location is the cytoplasm. The catalysed reaction is S-sulfanyl-L-cysteinyl-[protein] + uridine(34) in tRNA + AH2 + ATP = 2-thiouridine(34) in tRNA + L-cysteinyl-[protein] + A + AMP + diphosphate + H(+). In terms of biological role, catalyzes the 2-thiolation of uridine at the wobble position (U34) of tRNA, leading to the formation of s(2)U34. The sequence is that of tRNA-specific 2-thiouridylase MnmA from Burkholderia vietnamiensis (strain G4 / LMG 22486) (Burkholderia cepacia (strain R1808)).